Consider the following 80-residue polypeptide: Defensin-like protein 16 (80 aa).

The N-terminal stretch at 1-29 (MAKFASIITLIFAALVLFAAFDAPAMVEA) is a signal peptide. Glutamine 30 is subject to Pyrrolidone carboxylic acid. Disulfide bonds link cysteine 33–cysteine 80, cysteine 44–cysteine 65, cysteine 50–cysteine 74, and cysteine 54–cysteine 76.

This sequence belongs to the DEFL family. In terms of tissue distribution, predominantly expressed in leaves.

The protein localises to the secreted. Confers broad-spectrum resistance to pathogens. Has antifungal activity in vitro. This Arabidopsis thaliana (Mouse-ear cress) protein is Defensin-like protein 16 (PDF1.2A).